A 1058-amino-acid polypeptide reads, in one-letter code: Bromodomain-containing protein 1 (1058 aa).

Basic residues predominate over residues 1 to 12 (MRRKGRCHRGSA). Residues 1 to 25 (MRRKGRCHRGSAARHPSSPCSIKHS) are disordered. An interaction with KAT7/HBO1 and histones region spans residues 31–80 (LTYAQAQRMVEIEIEGRLHRISIFDPLEIILEDDLTAQEMSECNSNKENS). Phosphoserine is present on Ser128. A PHD-type 1 zinc finger spans residues 214-264 (DAVCCICMDGECQNSNVILFCDMCNLAVHQECYGVPYIPEGQWLCRHCLQS). The C2HC pre-PHD-type zinc finger occupies 268 to 301 (PADCVLCPNKGGAFKKTDDDRWGHVVCALWIPEV). The PHD-type 2 zinc finger occupies 325–389 (LTCYLCKQKG…RKTAYCDVHT (65 aa)). Residues Lys368, Lys516, and Lys519 each carry the N6-acetyllysine modification. Residues Lys554 and Lys594 each participate in a glycyl lysine isopeptide (Lys-Gly) (interchain with G-Cter in SUMO2) cross-link. The region spanning 562–666 (LRLTPLTVLL…DQGGVVLRQA (105 aa)) is the Bromo domain. A compositionally biased stretch (polar residues) spans 754 to 763 (KLSQQHSQAP). 2 disordered regions span residues 754 to 776 (KLSQ…EDEA) and 791 to 847 (LETL…AAPR). Phosphoserine is present on Ser803. An N6-acetyllysine modification is found at Lys903. The region spanning 929–1012 (PLKVVWAKCS…KSKMVPLGVD (84 aa)) is the PWWP domain. 2 positions are modified to phosphoserine: Ser1052 and Ser1055.

In terms of assembly, component of some HBO1 complexes composed of KAT7/HBO1, MEAF6, ING4 and BRD1/BRPF2. Component of the MOZ/MORF complex composed at least of ING5, KAT6A, KAT6B, MEAF6 and one of BRPF1, BRD1/BRPF2 and BRPF3. Interacts (via PHD-type zinc finger domain) with unmodified histone H3. Interacts (via PWWP domain) with dimethylated and trimethylated 'Lys-79' on histone H3.

It localises to the nucleus. It is found in the chromosome. In terms of biological role, scaffold subunit of various histone acetyltransferase (HAT) complexes, such as the MOZ/MORF and HBO1 complexes, that acts as a regulator of hematopoiesis. Plays a key role in HBO1 complex by directing KAT7/HBO1 specificity towards histone H3 'Lys-14' acetylation (H3K14ac), thereby promoting erythroid differentiation. The protein is Bromodomain-containing protein 1 of Mus musculus (Mouse).